The sequence spans 188 residues: Ribosome-recycling factor (188 aa).

The protein belongs to the RRF family.

It is found in the cytoplasm. In terms of biological role, responsible for the release of ribosomes from messenger RNA at the termination of protein biosynthesis. May increase the efficiency of translation by recycling ribosomes from one round of translation to another. The chain is Ribosome-recycling factor from Anaeromyxobacter sp. (strain K).